Reading from the N-terminus, the 376-residue chain is Transcriptional regulator STP4 (376 aa).

Disordered stretches follow at residues 25–58 (QNYCSIKSPSPTSTPTSTSLTMTSPPQLHNPHAS), 89–122 (SSNSPTPSNSSYSPTLLIPSNDRPASSSVYSNSS), and 137–210 (VNCI…NWKP). Low complexity-rich tracts occupy residues 32–50 (SPSPTSTPTSTSLTMTSPP) and 89–103 (SSNSPTPSNSSYSPT). Polar residues-rich tracts occupy residues 146 to 183 (PRSTSNLTENSEQSFTSQQSHPAISSNATITSPQLSVK) and 191 to 200 (EPQNSNTIIS). The segment at 241 to 263 (HICKYCERGFARPNDLFRHVKCH) adopts a C2H2-type zinc-finger fold.

The protein resides in the nucleus. Its function is as follows. Probable transcription factor involved in response to cell wall damage. In Candida albicans (strain SC5314 / ATCC MYA-2876) (Yeast), this protein is Transcriptional regulator STP4 (STP4).